The chain runs to 398 residues: Putative F-box protein At4g17780 (398 aa).

One can recognise an F-box domain in the interval P8 to S55.

This is Putative F-box protein At4g17780 from Arabidopsis thaliana (Mouse-ear cress).